Consider the following 918-residue polypeptide: Protein translocase subunit SecA (918 aa).

Residues glutamine 87, 105–109 (GEGKT), and aspartate 494 each bind ATP. A compositionally biased stretch (basic and acidic residues) spans 863-883 (KQDDTSPKEYKKIGQEQRAEV). Positions 863-918 (KQDDTSPKEYKKIGQEQRAEVDMFGNELKSNKTKPQVSSTTSSGGGSERRSSRRKK) are disordered.

This sequence belongs to the SecA family. As to quaternary structure, monomer and homodimer. Part of the essential Sec protein translocation apparatus which comprises SecA, SecYEG and auxiliary proteins SecDF. Other proteins may also be involved.

The protein localises to the cell inner membrane. It is found in the cytoplasm. The catalysed reaction is ATP + H2O + cellular proteinSide 1 = ADP + phosphate + cellular proteinSide 2.. Functionally, part of the Sec protein translocase complex. Interacts with the SecYEG preprotein conducting channel. Has a central role in coupling the hydrolysis of ATP to the transfer of proteins into and across the cell membrane, serving as an ATP-driven molecular motor driving the stepwise translocation of polypeptide chains across the membrane. The protein is Protein translocase subunit SecA of Leptospira biflexa serovar Patoc (strain Patoc 1 / Ames).